The sequence spans 313 residues: Potassium channel subfamily K member 6 (313 aa).

Residues 1 to 4 (MRRG) lie on the Cytoplasmic side of the membrane. Residues 5 to 25 (ALLASALAAYAGYLALGALLV) form a helical membrane-spanning segment. N-linked (GlcNAc...) asparagine glycosylation is found at Asn79 and Asn85. The segment at residues 90–115 (AWDFASALFFASTLVTTVGYGYTTPL) is an intramembrane region (pore-forming). Thr106, Val107, Gly108, and Tyr109 together coordinate K(+). A selectivity filter 1 region spans residues 106-111 (TVGYGY). A helical transmembrane segment spans residues 121-141 (AFSIVFALLGVPITMLLLTAS). The Cytoplasmic portion of the chain corresponds to 142 to 172 (AQRLSLLLTHAPLSWLSLHWGWPPQRAARWH). Residues 173-193 (LVALLMVIVAIFFLVPAAVFA) traverse the membrane as a helical segment. The segment at residues 199-223 (WSFLDAFYFCFISLSTIGLGDYVPG) is an intramembrane region (pore-forming). K(+)-binding residues include Thr214, Ile215, and Gly216. The tract at residues 214-219 (TIGLGD) is selectivity filter 2. The helical transmembrane segment at 236–256 (VLVTAYLFLGLVAMVLVLQTF) threads the bilayer. The Cytoplasmic segment spans residues 257-313 (RRVSDLHGLTELILLPDPDPASLSQDEDDQVAVLDARTDLHQHLSAASHADYASIPR). 2 short sequence motifs (lysosomal targeting signal) span residues 282–290 (DEDDQVAVL) and 308–312 (YASIP).

Belongs to the two pore domain potassium channel (TC 1.A.1.8) family. In terms of assembly, homodimer; disulfide-linked. N-glycosylation is necessary for targeting to lysosomes.

Its subcellular location is the late endosome membrane. The protein resides in the lysosome membrane. The enzyme catalyses K(+)(in) = K(+)(out). Its function is as follows. K(+) channel that conducts outward rectifying currents at the membranes of the endolysosomal system. Active in lysosomes where it regulates lysosome numbers and size. In macrophages, enables K(+) efflux coupled to ATP-induced NLRP3 inflammasome activation upon bacterial infection. Cooperates with ATP-gated P2RX7 to activate NLRP3 inflammasome, with P2RX7 conducting Ca(2+) and Na(+) influx that sets the membrane potential for K(+) efflux. This Mus musculus (Mouse) protein is Potassium channel subfamily K member 6.